The sequence spans 764 residues: 5-methyltetrahydropteroyltriglutamate--homocysteine methyltransferase (764 aa).

5-methyltetrahydropteroyltri-L-glutamate is bound by residues 16–19 (RELK) and lysine 121. L-homocysteine is bound by residues 440–442 (IGS) and glutamate 493. L-methionine-binding positions include 440–442 (IGS) and glutamate 493. Residues 524-525 (RC) and tryptophan 570 contribute to the 5-methyltetrahydropteroyltri-L-glutamate site. Residue aspartate 608 coordinates L-homocysteine. Residue aspartate 608 participates in L-methionine binding. Glutamate 614 contacts 5-methyltetrahydropteroyltri-L-glutamate. Zn(2+)-binding residues include histidine 650, cysteine 652, and glutamate 674. The Proton donor role is filled by histidine 703. A Zn(2+)-binding site is contributed by cysteine 735.

This sequence belongs to the vitamin-B12 independent methionine synthase family. Zn(2+) serves as cofactor.

The enzyme catalyses 5-methyltetrahydropteroyltri-L-glutamate + L-homocysteine = tetrahydropteroyltri-L-glutamate + L-methionine. It functions in the pathway amino-acid biosynthesis; L-methionine biosynthesis via de novo pathway; L-methionine from L-homocysteine (MetE route): step 1/1. Catalyzes the transfer of a methyl group from 5-methyltetrahydrofolate to homocysteine resulting in methionine formation. In Burkholderia lata (strain ATCC 17760 / DSM 23089 / LMG 22485 / NCIMB 9086 / R18194 / 383), this protein is 5-methyltetrahydropteroyltriglutamate--homocysteine methyltransferase.